The primary structure comprises 419 residues: UDP-N-acetylglucosamine 1-carboxyvinyltransferase (419 aa).

A phosphoenolpyruvate-binding site is contributed by 22-23; it reads KN. Arg-91 contributes to the UDP-N-acetyl-alpha-D-glucosamine binding site. Catalysis depends on Cys-115, which acts as the Proton donor. Cys-115 is modified (2-(S-cysteinyl)pyruvic acid O-phosphothioketal). Residues 120-124, 160-163, Asp-305, and Val-327 contribute to the UDP-N-acetyl-alpha-D-glucosamine site; these read RPVDL and KVSV.

Belongs to the EPSP synthase family. MurA subfamily.

It localises to the cytoplasm. The catalysed reaction is phosphoenolpyruvate + UDP-N-acetyl-alpha-D-glucosamine = UDP-N-acetyl-3-O-(1-carboxyvinyl)-alpha-D-glucosamine + phosphate. It functions in the pathway cell wall biogenesis; peptidoglycan biosynthesis. In terms of biological role, cell wall formation. Adds enolpyruvyl to UDP-N-acetylglucosamine. The sequence is that of UDP-N-acetylglucosamine 1-carboxyvinyltransferase from Salmonella schwarzengrund (strain CVM19633).